A 209-amino-acid polypeptide reads, in one-letter code: Imidazoleglycerol-phosphate dehydratase (209 aa).

It belongs to the imidazoleglycerol-phosphate dehydratase family.

Its subcellular location is the cytoplasm. The enzyme catalyses D-erythro-1-(imidazol-4-yl)glycerol 3-phosphate = 3-(imidazol-4-yl)-2-oxopropyl phosphate + H2O. Its pathway is amino-acid biosynthesis; L-histidine biosynthesis; L-histidine from 5-phospho-alpha-D-ribose 1-diphosphate: step 6/9. This chain is Imidazoleglycerol-phosphate dehydratase, found in Prochlorococcus marinus (strain MIT 9313).